The following is a 122-amino-acid chain: Small ribosomal subunit protein uS13 (122 aa).

A disordered region spans residues 94-122 (GLPVRGQSTQKNARTRKGPRKTVAGKKGK). The span at 106 to 122 (ARTRKGPRKTVAGKKGK) shows a compositional bias: basic residues.

It belongs to the universal ribosomal protein uS13 family. In terms of assembly, part of the 30S ribosomal subunit. Forms a loose heterodimer with protein S19. Forms two bridges to the 50S subunit in the 70S ribosome.

In terms of biological role, located at the top of the head of the 30S subunit, it contacts several helices of the 16S rRNA. In the 70S ribosome it contacts the 23S rRNA (bridge B1a) and protein L5 of the 50S subunit (bridge B1b), connecting the 2 subunits; these bridges are implicated in subunit movement. Contacts the tRNAs in the A and P-sites. In Mycoplasmopsis synoviae (strain 53) (Mycoplasma synoviae), this protein is Small ribosomal subunit protein uS13.